Consider the following 199-residue polypeptide: V-type ATP synthase subunit E (199 aa).

Belongs to the V-ATPase E subunit family.

Its function is as follows. Produces ATP from ADP in the presence of a proton gradient across the membrane. This is V-type ATP synthase subunit E from Borrelia garinii subsp. bavariensis (strain ATCC BAA-2496 / DSM 23469 / PBi) (Borreliella bavariensis).